We begin with the raw amino-acid sequence, 458 residues long: NADH-quinone oxidoreductase subunit N (458 aa).

The next 13 membrane-spanning stretches (helical) occupy residues 3–23 (QYLF…LLFL), 29–49 (FGLI…TCTS), 64–84 (QNVK…AIAV), 92–112 (FSVL…SSTL), 147–167 (TLLG…IFVV), 188–208 (ILLF…HAWI), 222–242 (FFAV…ISNL), 265–285 (NILF…AFGQ), 291–311 (FIGF…SNSA), 320–340 (IAYA…VLML), 358–378 (VALA…FIGF), 394–414 (IPTA…YARI), and 437–457 (LLTS…VLLI).

It belongs to the complex I subunit 2 family. NDH-1 is composed of 14 different subunits. Subunits NuoA, H, J, K, L, M, N constitute the membrane sector of the complex.

It localises to the cell inner membrane. The catalysed reaction is a quinone + NADH + 5 H(+)(in) = a quinol + NAD(+) + 4 H(+)(out). Functionally, NDH-1 shuttles electrons from NADH, via FMN and iron-sulfur (Fe-S) centers, to quinones in the respiratory chain. The immediate electron acceptor for the enzyme in this species is believed to be ubiquinone. Couples the redox reaction to proton translocation (for every two electrons transferred, four hydrogen ions are translocated across the cytoplasmic membrane), and thus conserves the redox energy in a proton gradient. The sequence is that of NADH-quinone oxidoreductase subunit N from Neorickettsia risticii (strain Illinois).